We begin with the raw amino-acid sequence, 777 residues long: CRISPR system single-strand-specific deoxyribonuclease Cas10/Csm1 (subtype III-A) (777 aa).

The 106-residue stretch at 1 to 106 (MEIDELTALG…VYEADNLASG (106 aa)) folds into the HD domain. The GGDEF domain occupies 513–660 (RRLGVMKGDV…GRNRVFVVGR (148 aa)).

The protein belongs to the CRISPR-associated Cas10/Csm1 family. As to quaternary structure, probably part of the Csm effector complex, that includes Cas10, Csm2, Csm3, Csm4, Csm5 and mature crRNA. Will form a homodimer in solution, interacts with Csm4, which is a tighter, better association than the homodimeric Cas10 and uses the same interface for interaction. Requires a divalent metal cation as cofactor.

SsDNase activity is inhibited by EDTA. Its function is as follows. CRISPR (clustered regularly interspaced short palindromic repeat) is an adaptive immune system that provides protection against mobile genetic elements (viruses, transposable elements and conjugative plasmids). CRISPR clusters contain spacers, sequences complementary to antecedent mobile elements, and target invading nucleic acids. CRISPR clusters are transcribed and processed into CRISPR RNA (crRNA). The type III-A Csm effector complex binds crRNA and acts as a crRNA-guided RNase, DNase and cyclic oligoadenylate synthase; binding of target RNA cognate to the crRNA is required for all activities. A single-strand deoxyribonuclease (ssDNase) which digests linear and circular ssDNA; has 5'-3' and 3'-5' exonuclease activity as well as a less efficient endonuclease activity. Has a minimal size requirement; 100 nucleotide ssDNA (nt) is more efficiently digested than 50 or 25 nt ssDNA, while 14 nt ssDNA is not cleaved at all. It has no activity on dsDNA or ssRNA. In terms of biological role, ssDNase activity is stimulated in the ternary Csm effector complex; binding of cognate target RNA activates the ssDNase, as the target RNA is degraded ssDNA activity decreases. Functionally, when associated with the ternary Csm effector complex (the crRNA, Cas proteins and a cognate target ssRNA) synthesizes cyclic oligoadenylates (cOA) from ATP. cOAs are second messengers that stimulate the ssRNase activity of Csm6, inducing an antiviral state important for defense against invading nucleic acids. This is CRISPR system single-strand-specific deoxyribonuclease Cas10/Csm1 (subtype III-A) from Thermococcus onnurineus (strain NA1).